Consider the following 630-residue polypeptide: Scarecrow-like protein 34 (630 aa).

Positions 240-628 (KKKKSQVVDF…RTLYASSCWV (389 aa)) constitute a GRAS domain. Positions 247–312 (VDFRTLLTHC…GSTGPMIQTY (66 aa)) are leucine repeat I (LRI). The tract at residues 331–396 (YRVYLSSSPF…DVPRKLRITG (66 aa)) is VHIID. Positions 362–366 (LHIVD) match the VHIID motif. The tract at residues 412–444 (ETGRRLAEYCKRFNVPFEYKAIASQNWETIRIE) is leucine repeat II (LRII). The segment at 454 to 549 (LAVNAGLRLK…REFYGREAMN (96 aa)) is PFYRE. The segment at 552 to 628 (ACEEADRVER…RTLYASSCWV (77 aa)) is SAW.

This sequence belongs to the GRAS family.

It is found in the nucleus. Its function is as follows. Probable transcription factor involved in plant development. This chain is Scarecrow-like protein 34 (SCL34), found in Arabidopsis thaliana (Mouse-ear cress).